Consider the following 101-residue polypeptide: MERPRSPQCSAPASASASVTLAQLLQLVQQGQELPGLEKRHIAAIHGEPTASRLPRRPKPWEAAALAESLPPPTLRIGTAPAEPGLVEAATAPSSWHTVGP.

It is found in the peroxisome. Its function is as follows. May be a peroxin involved in the PTS2-mediated protein import pathway. This chain is Peroxisomal biogenesis factor 39, found in Homo sapiens (Human).